The primary structure comprises 172 residues: Adenine phosphoribosyltransferase (172 aa).

Belongs to the purine/pyrimidine phosphoribosyltransferase family. As to quaternary structure, homodimer.

The protein resides in the cytoplasm. It carries out the reaction AMP + diphosphate = 5-phospho-alpha-D-ribose 1-diphosphate + adenine. It participates in purine metabolism; AMP biosynthesis via salvage pathway; AMP from adenine: step 1/1. In terms of biological role, catalyzes a salvage reaction resulting in the formation of AMP, that is energically less costly than de novo synthesis. The protein is Adenine phosphoribosyltransferase of Prochlorococcus marinus (strain MIT 9211).